A 196-amino-acid polypeptide reads, in one-letter code: Recombination protein RecR (196 aa).

Residues 55–70 (CELCGNLESESPCSIC) form a C4-type zinc finger. The Toprim domain maps to 78 to 173 (DIVCVVEEIT…KLSFLAHGIP (96 aa)).

Belongs to the RecR family.

Functionally, may play a role in DNA repair. It seems to be involved in an RecBC-independent recombinational process of DNA repair. It may act with RecF and RecO. This chain is Recombination protein RecR, found in Neorickettsia sennetsu (strain ATCC VR-367 / Miyayama) (Ehrlichia sennetsu).